We begin with the raw amino-acid sequence, 577 residues long: Autophagy-related protein 20 (577 aa).

Residues 57–81 form a disordered region; sequence GQSYVAPHSGGGRTSSGSSSSASLQ. Residues 95–239 form the PX domain; it reads GEQGRVRILE…DFLDPNNANW (145 aa). Residues arginine 131, serine 133, lysine 157, and arginine 205 each contribute to the a 1,2-diacyl-sn-glycero-3-phospho-(1D-myo-inositol-3-phosphate) site.

This sequence belongs to the sorting nexin family.

The protein resides in the endosome membrane. It is found in the preautophagosomal structure membrane. Its function is as follows. Required for cytoplasm to vacuole transport (Cvt), pexophagy and mitophagy. Also involved in endoplasmic reticulum-specific autophagic process and is essential for the survival of cells subjected to severe ER stress. Functions in protein retrieval from the endocytic pathway. This is Autophagy-related protein 20 (ATG20) from Eremothecium gossypii (strain ATCC 10895 / CBS 109.51 / FGSC 9923 / NRRL Y-1056) (Yeast).